The sequence spans 237 residues: Chalcone--flavanone isomerase 1 (237 aa).

Positions 48, 113, and 190 each coordinate substrate.

The protein belongs to the chalcone isomerase family.

It carries out the reaction a chalcone = a flavanone.. It participates in secondary metabolite biosynthesis; flavonoid biosynthesis. Catalyzes the intramolecular cyclization of bicyclic chalcones into tricyclic (S)-flavanones. Responsible for the isomerization of 4,2',4',6'-tetrahydroxychalcone (also termed chalcone) into naringenin. The polypeptide is Chalcone--flavanone isomerase 1 (CHI1) (Fragaria ananassa (Strawberry)).